The chain runs to 405 residues: 4-hydroxy-3-methylbut-2-enyl diphosphate reductase (405 aa).

Position 66 (Cys-66) interacts with [4Fe-4S] cluster. A (2E)-4-hydroxy-3-methylbut-2-enyl diphosphate-binding site is contributed by His-96. His-96 is a binding site for dimethylallyl diphosphate. His-96 is an isopentenyl diphosphate binding site. Cys-158 provides a ligand contact to [4Fe-4S] cluster. Position 186 (His-186) interacts with (2E)-4-hydroxy-3-methylbut-2-enyl diphosphate. His-186 lines the dimethylallyl diphosphate pocket. Residue His-186 participates in isopentenyl diphosphate binding. Glu-188 serves as the catalytic Proton donor. Position 251 (Thr-251) interacts with (2E)-4-hydroxy-3-methylbut-2-enyl diphosphate. Position 289 (Cys-289) interacts with [4Fe-4S] cluster. Positions 318, 319, 320, and 380 each coordinate (2E)-4-hydroxy-3-methylbut-2-enyl diphosphate. Dimethylallyl diphosphate contacts are provided by Ser-318, Ser-319, Asn-320, and Ser-380. Positions 318, 319, 320, and 380 each coordinate isopentenyl diphosphate.

This sequence belongs to the IspH family. [4Fe-4S] cluster is required as a cofactor.

The enzyme catalyses isopentenyl diphosphate + 2 oxidized [2Fe-2S]-[ferredoxin] + H2O = (2E)-4-hydroxy-3-methylbut-2-enyl diphosphate + 2 reduced [2Fe-2S]-[ferredoxin] + 2 H(+). It catalyses the reaction dimethylallyl diphosphate + 2 oxidized [2Fe-2S]-[ferredoxin] + H2O = (2E)-4-hydroxy-3-methylbut-2-enyl diphosphate + 2 reduced [2Fe-2S]-[ferredoxin] + 2 H(+). It participates in isoprenoid biosynthesis; dimethylallyl diphosphate biosynthesis; dimethylallyl diphosphate from (2E)-4-hydroxy-3-methylbutenyl diphosphate: step 1/1. It functions in the pathway isoprenoid biosynthesis; isopentenyl diphosphate biosynthesis via DXP pathway; isopentenyl diphosphate from 1-deoxy-D-xylulose 5-phosphate: step 6/6. Catalyzes the conversion of 1-hydroxy-2-methyl-2-(E)-butenyl 4-diphosphate (HMBPP) into a mixture of isopentenyl diphosphate (IPP) and dimethylallyl diphosphate (DMAPP). Acts in the terminal step of the DOXP/MEP pathway for isoprenoid precursor biosynthesis. The sequence is that of 4-hydroxy-3-methylbut-2-enyl diphosphate reductase from Cyanothece sp. (strain PCC 7425 / ATCC 29141).